Here is a 541-residue protein sequence, read N- to C-terminus: Phosphoenolpyruvate carboxykinase (ATP) (541 aa).

Substrate contacts are provided by Arg64, Tyr206, and Lys212. ATP contacts are provided by residues Lys212, His231, and 247–255 (GLSGTGKTT). Mn(2+) is bound by residues Lys212 and His231. Asp268 is a Mn(2+) binding site. ATP is bound by residues Glu296, Arg332, and Thr454. Arg332 lines the substrate pocket.

It belongs to the phosphoenolpyruvate carboxykinase (ATP) family. As to quaternary structure, monomer. Mn(2+) is required as a cofactor.

It localises to the cytoplasm. It catalyses the reaction oxaloacetate + ATP = phosphoenolpyruvate + ADP + CO2. The protein operates within carbohydrate biosynthesis; gluconeogenesis. In terms of biological role, involved in the gluconeogenesis. Catalyzes the conversion of oxaloacetate (OAA) to phosphoenolpyruvate (PEP) through direct phosphoryl transfer between the nucleoside triphosphate and OAA. The polypeptide is Phosphoenolpyruvate carboxykinase (ATP) (Wigglesworthia glossinidia brevipalpis).